The primary structure comprises 245 residues: MANEAYPCPCDIGHRLEYGGLGREVQVEHIKAYVTKSPVDAGKAVIVIQDIFGWQLPNTRYIADMISGNGYTTIVPDFFVGQEPWDPSGDWSIFPEWLKTRNAQKIDREISAILKYLKQQCHAQKIGIVGFCWGGTAVHHLMMKYSEFRAGVSVYGIVKDSEDIYNLKNPTLFIFAENDVVIPLKDVSLLTQKLKEHCKVEYQIKTFSGQTHGFVHRKREDCSPADKPYIDEARRNLIEWLNKYM.

The residue at position 2 (Ala-2) is an N-acetylalanine. N6-acetyllysine is present on Lys-36. Active-site residues include Cys-132, Asp-179, and His-212. Phosphoserine is present on Ser-223.

The protein belongs to the dienelactone hydrolase family. In terms of tissue distribution, widely expressed, with highest levels in liver, followed by kidney, small intestine and colon. Present in liver and intestine (at protein level).

It is found in the cytoplasm. The protein resides in the cytosol. With respect to regulation, strongly inhibited by p-chloromercuribenzoate (PCMB). Partially inhibited by bis-p-nitrophenylphosphate (BNPP). Not inhibited by DFP, PMSF, eserine or EDTA. Cysteine hydrolase. Can convert the prodrug olmesartan medoxomil into its pharmacologically active metabolite olmerstatan, an angiotensin receptor blocker, in liver and intestine. May also activate beta-lactam antibiotics faropenem medoxomil and lenampicillin. This Homo sapiens (Human) protein is Carboxymethylenebutenolidase homolog (CMBL).